The sequence spans 414 residues: Phosphopentomutase (414 aa).

Residues aspartate 10, aspartate 309, histidine 314, aspartate 350, histidine 351, and histidine 362 each coordinate Mn(2+).

It belongs to the phosphopentomutase family. The cofactor is Mn(2+).

Its subcellular location is the cytoplasm. The catalysed reaction is 2-deoxy-alpha-D-ribose 1-phosphate = 2-deoxy-D-ribose 5-phosphate. It catalyses the reaction alpha-D-ribose 1-phosphate = D-ribose 5-phosphate. The protein operates within carbohydrate degradation; 2-deoxy-D-ribose 1-phosphate degradation; D-glyceraldehyde 3-phosphate and acetaldehyde from 2-deoxy-alpha-D-ribose 1-phosphate: step 1/2. Isomerase that catalyzes the conversion of deoxy-ribose 1-phosphate (dRib-1-P) and ribose 1-phosphate (Rib-1-P) to deoxy-ribose 5-phosphate (dRib-5-P) and ribose 5-phosphate (Rib-5-P), respectively. This Hahella chejuensis (strain KCTC 2396) protein is Phosphopentomutase.